The following is a 109-amino-acid chain: Small ribosomal subunit protein eS25 (109 aa).

Residues 1–36 form a disordered region; that stretch reads MGGASKKPISTVEKRMKKMAEEQQKKQQKRATTKTG. Residues 12-25 are compositionally biased toward basic and acidic residues; sequence VEKRMKKMAEEQQK.

It belongs to the eukaryotic ribosomal protein eS25 family.

In Sulfurisphaera tokodaii (strain DSM 16993 / JCM 10545 / NBRC 100140 / 7) (Sulfolobus tokodaii), this protein is Small ribosomal subunit protein eS25 (rps25e).